The primary structure comprises 361 residues: RLA class I histocompatibility antigen, alpha chain 11/11 (361 aa).

Residues 1–24 form the signal peptide; the sequence is MGSMAPRTLLLLLAGALTLKDTQA. The segment at 25–114 is alpha-1; that stretch reads GSHSMRYFYT…ALRYYNQSAA (90 aa). Over 25-308 the chain is Extracellular; that stretch reads GSHSMRYFYT…EPPAQPTALI (284 aa). N-linked (GlcNAc...) asparagine glycosylation is present at Asn-110. An alpha-2 region spans residues 115-206; sequence GSHTFQTMFG…EMGKETLQRA (92 aa). Cystine bridges form between Cys-125–Cys-188 and Cys-227–Cys-283. An alpha-3 region spans residues 207–298; the sequence is DPPKAHVTHH…GLPEPLTLTW (92 aa). The region spanning 209–297 is the Ig-like C1-type domain; the sequence is PKAHVTHHPA…EGLPEPLTLT (89 aa). The interval 299–308 is connecting peptide; the sequence is EPPAQPTALI. The chain crosses the membrane as a helical span at residues 309–329; that stretch reads VGIVAGVLGVLLILGAVVAVV. Residues 330–361 lie on the Cytoplasmic side of the membrane; it reads RRKKHSSDGKGGRYTPAAGGHRDQGSDDSLMP. The segment at 335 to 361 is disordered; sequence SSDGKGGRYTPAAGGHRDQGSDDSLMP. A phosphoserine mark is found at Ser-355 and Ser-358.

It belongs to the MHC class I family. In terms of assembly, heterodimer of an alpha chain and a beta chain (beta-2-microglobulin).

It localises to the membrane. Its function is as follows. Involved in the presentation of foreign antigens to the immune system. This Oryctolagus cuniculus (Rabbit) protein is RLA class I histocompatibility antigen, alpha chain 11/11.